The following is a 1648-amino-acid chain: Pleiotropic ABC efflux transporter of multiple drugs YBT1 (1648 aa).

Residues 28-48 form a helical membrane-spanning segment; that stretch reads NYVPTTLVTISILILLHNFFI. N-linked (GlcNAc...) asparagine glycosylation is present at N72. 4 helical membrane passes run 140–160, 175–195, 207–227, and 250–270; these read VVIE…LSIE, PHVL…LNLN, NIWL…ILPF, and LNLV…LPVL. N306 carries an N-linked (GlcNAc...) asparagine glycan. 2 consecutive transmembrane segments (helical) span residues 352 to 372 and 392 to 412; these read FLNL…SIFV and MNLA…VAIC. One can recognise an ABC transmembrane type-1 1 domain in the interval 361–674; the sequence is CFTTISAFSI…ISDMLSYLIQ (314 aa). N471 carries N-linked (GlcNAc...) asparagine glycosylation. 2 consecutive transmembrane segments (helical) span residues 501-521 and 523-543; these read ISEL…LTVS and ILLY…TIII. The N-linked (GlcNAc...) asparagine glycan is linked to N573. 2 helical membrane passes run 612–632 and 643–662; these read VWCV…GCTF and LTTP…RDPL. The ABC transporter 1 domain maps to 706–947; that stretch reads LAFENVTLRW…GLLGEDENMK (242 aa). N710 carries an N-linked (GlcNAc...) asparagine glycan. Residue 741 to 748 coordinates ATP; sequence GATGSGKT. N784 and N798 each carry an N-linked (GlcNAc...) asparagine glycan. Residues 1012-1032 form a helical membrane-spanning segment; sequence MYGGWYTIVALASVFTAILCL. The region spanning 1032–1333 is the ABC transmembrane type-1 2 domain; the sequence is LQITQAWWIR…LVRQYSELEM (302 aa). N1042 carries an N-linked (GlcNAc...) asparagine glycan. 3 helical membrane-spanning segments follow: residues 1089 to 1109, 1168 to 1188, and 1191 to 1211; these read IAKF…IGSI, IQSV…ISYI, and AFFP…FFYL. N1255 carries N-linked (GlcNAc...) asparagine glycosylation. Transmembrane regions (helical) follow at residues 1282-1302 and 1305-1325; these read LIGA…INNI and GLAG…LWLV. One can recognise an ABC transporter 2 domain in the interval 1372–1622; the sequence is VEVNNLSLKY…KKSIFYNMCE (251 aa). N1376 carries an N-linked (GlcNAc...) asparagine glycan. 1406-1413 contributes to the ATP binding site; that stretch reads GRTGAGKS. Residues N1503, N1524, and N1573 are each glycosylated (N-linked (GlcNAc...) asparagine).

It belongs to the ABC transporter superfamily. ABCC family. Conjugate transporter (TC 3.A.1.208) subfamily.

The protein resides in the membrane. Its function is as follows. Pleiotropic ABC efflux transporter that might be involved in the resistance to azoles such as fluconazole. The sequence is that of Pleiotropic ABC efflux transporter of multiple drugs YBT1 from Candida glabrata (strain ATCC 2001 / BCRC 20586 / JCM 3761 / NBRC 0622 / NRRL Y-65 / CBS 138) (Yeast).